We begin with the raw amino-acid sequence, 707 residues long: Choline transporter-like protein 4 (707 aa).

Over 1 to 32 the chain is Cytoplasmic; the sequence is MGRKQNENEAHGNSAKYDPSFRGPIKNRGCTD. A helical membrane pass occupies residues 33–53; the sequence is IICCVLFLIFILGYIIVGLVA. Residues 54–227 are Extracellular-facing; that stretch reads WVYGDPRQVL…KIFEDFAQSW (174 aa). 4 N-linked (GlcNAc...) asparagine glycosylation sites follow: asparagine 67, asparagine 185, asparagine 195, and asparagine 196. A helical transmembrane segment spans residues 228-248; sequence YWILVALGVALALSLLFILLL. Residues 249–250 are Cytoplasmic-facing; sequence RL. Residues 251 to 271 traverse the membrane as a helical segment; it reads VAAPLVLLLIVGVLAVLAYGI. Topologically, residues 272 to 307 are extracellular; that stretch reads YHCWQQYQVFRDKGASITQLGFTTNFSAYQSVKETW. N-linked (GlcNAc...) asparagine glycosylation is present at asparagine 296. A helical membrane pass occupies residues 308 to 328; the sequence is LAALIVLAVLEGILLLMLIFL. Topologically, residues 329 to 356 are cytoplasmic; it reads RQRIRIAIALLKEASRAVGQMMSTMFYP. A helical membrane pass occupies residues 357-377; the sequence is LVTFVLLVICIGYWAVTALYL. Residues 378–452 lie on the Extracellular side of the membrane; that stretch reads ATSGQPQYIY…GVLGLFWTVN (75 aa). Asparagine 391, asparagine 403, and asparagine 413 each carry an N-linked (GlcNAc...) asparagine glycan. The chain crosses the membrane as a helical span at residues 453-473; it reads WVLALGQCVLAGAFASFYWAF. Topologically, residues 474–498 are cytoplasmic; that stretch reads HKPRDIPTFPLSSAFIRTLRYHTGS. A helical membrane pass occupies residues 499-519; that stretch reads LAFGALILSLVQIARVILEYI. Residues 520-557 are Extracellular-facing; the sequence is DHKLRGSQNPVARCIICCFKCCLWCLEKFIKFLNRNAY. Residues 558 to 578 traverse the membrane as a helical segment; the sequence is IMIAIYGKNFCVSAKNAFMLL. Residues 579-594 lie on the Cytoplasmic side of the membrane; that stretch reads MRNVLRVVVLDKVTDL. A helical membrane pass occupies residues 595–615; it reads LLFFGKLLVVGGVGVLSFFFF. The Extracellular segment spans residues 616–635; that stretch reads SGRIKGLGKDFENPNLNYYW. The chain crosses the membrane as a helical span at residues 636–656; that stretch reads LPIMTSIMGAYVIASGFFSVF. Residues 657-707 are Cytoplasmic-facing; that stretch reads GMCVDTLFLCFLEDLERNDGSQERPYYMPKALLKILGKKNEAPTGGKTRKK.

Belongs to the CTL (choline transporter-like) family. In terms of processing, N-glycosylated; N-glycosylation of Asn-67 and Asn-391 is required for a proper thiamine pyrophosphate uptake. In terms of tissue distribution, expressed in colon and cecum.

The protein resides in the membrane. It localises to the apical cell membrane. It catalyses the reaction choline(out) + n H(+)(in) = choline(in) + n H(+)(out). It carries out the reaction thiamine diphosphate(out) = thiamine diphosphate(in). Its function is as follows. Choline transporter that plays a role in the choline-acetylcholine system and is required to the efferent innervation of hair cells in the olivocochlear bundle for the maintenance of physiological function of outer hair cells and the protection of hair cells from acoustic injury. Also described as a thiamine pyrophosphate transporter in colon, may mediate the absorption of microbiota-generated thiamine pyrophosphate and contribute to host thiamine (vitamin B1) homeostasis. This Mus musculus (Mouse) protein is Choline transporter-like protein 4.